Reading from the N-terminus, the 254-residue chain is Pyrroloquinoline-quinone synthase (254 aa).

Belongs to the PqqC family.

It carries out the reaction 6-(2-amino-2-carboxyethyl)-7,8-dioxo-1,2,3,4,7,8-hexahydroquinoline-2,4-dicarboxylate + 3 O2 = pyrroloquinoline quinone + 2 H2O2 + 2 H2O + H(+). The protein operates within cofactor biosynthesis; pyrroloquinoline quinone biosynthesis. Ring cyclization and eight-electron oxidation of 3a-(2-amino-2-carboxyethyl)-4,5-dioxo-4,5,6,7,8,9-hexahydroquinoline-7,9-dicarboxylic-acid to PQQ. This Rhodopseudomonas palustris (strain ATCC BAA-98 / CGA009) protein is Pyrroloquinoline-quinone synthase.